Consider the following 145-residue polypeptide: Large ribosomal subunit protein uL13 (145 aa).

Belongs to the universal ribosomal protein uL13 family. Part of the 50S ribosomal subunit.

In terms of biological role, this protein is one of the early assembly proteins of the 50S ribosomal subunit, although it is not seen to bind rRNA by itself. It is important during the early stages of 50S assembly. The protein is Large ribosomal subunit protein uL13 of Bacillus cereus (strain G9842).